The chain runs to 371 residues: Signal peptide peptidase-like 1 (371 aa).

Over 1 to 6 (MESLWK) the chain is Lumenal. The chain crosses the membrane as a helical span at residues 7-27 (LSYLLEPASLALILTAVSVAY). At 28 to 57 (ASASRALDHGREMERNLDFSEASITLDRSQ) the chain is on the cytoplasmic side. Residues 58–75 (ALMIPLASSCSLLLMFYL) form a helical membrane-spanning segment. At 76–80 (FSSVS) the chain is on the lumenal side. The chain crosses the membrane as a helical span at residues 81-103 (HLVTAFTAVASAMALFFCLSPYV). The Cytoplasmic segment spans residues 104–123 (NCVRSRLGVGDPFVSRCCSK). Residues 124 to 146 (PFTRLQGLLVAICVGTVVAWLVS) traverse the membrane as a helical segment. The Lumenal portion of the chain corresponds to 147-149 (GHW). The helical transmembrane segment at 150 to 167 (LLNNLLGISICIAFVSHV) threads the bilayer. Residues 168–171 (RLPN) lie on the Cytoplasmic side of the membrane. Residues 172-192 (IKICALLLVCLFVYDVFWVFF) traverse the membrane as a helical segment. The active site involves D186. The Lumenal portion of the chain corresponds to 193–258 (SERFFGANVM…LAPGSSPGDY (66 aa)). A helical transmembrane segment spans residues 259-279 (MMLGLGDMAIPGMLLALVLSF). The active site involves D265. The Cytoplasmic portion of the chain corresponds to 280–301 (DHRKIKDMSVSQDMPPSKQRKY). A helical transmembrane segment spans residues 302 to 322 (VWYALTGYGVGLVTALAAGIL). Residues 323–326 (SQSP) are Lumenal-facing. Residues 327 to 347 (QPALLYLVPSTLGPVMYMSWL) form a helical membrane-spanning segment. The PAL motif lies at 328–330 (PAL). The Cytoplasmic portion of the chain corresponds to 348–371 (RNELWELWEGSRPIINDKAHLLEV).

The protein belongs to the peptidase A22B family.

The protein resides in the endosome membrane. Functionally, intramembrane-cleaving aspartic protease (I-CLiP) that cleaves type II membrane signal peptides in the hydrophobic plane of the membrane. The protein is Signal peptide peptidase-like 1 (SPPL1) of Oryza sativa subsp. japonica (Rice).